The primary structure comprises 118 residues: Large ribosomal subunit protein bL20 (118 aa).

This sequence belongs to the bacterial ribosomal protein bL20 family.

Functionally, binds directly to 23S ribosomal RNA and is necessary for the in vitro assembly process of the 50S ribosomal subunit. It is not involved in the protein synthesizing functions of that subunit. The sequence is that of Large ribosomal subunit protein bL20 from Clostridioides difficile (strain 630) (Peptoclostridium difficile).